The primary structure comprises 171 residues: 3-hydroxydecanoyl-[acyl-carrier-protein] dehydratase (171 aa).

His70 is a catalytic residue.

The protein belongs to the thioester dehydratase family. FabA subfamily. As to quaternary structure, homodimer.

Its subcellular location is the cytoplasm. The enzyme catalyses a (3R)-hydroxyacyl-[ACP] = a (2E)-enoyl-[ACP] + H2O. The catalysed reaction is (3R)-hydroxydecanoyl-[ACP] = (2E)-decenoyl-[ACP] + H2O. It catalyses the reaction (2E)-decenoyl-[ACP] = (3Z)-decenoyl-[ACP]. Its pathway is lipid metabolism; fatty acid biosynthesis. Functionally, necessary for the introduction of cis unsaturation into fatty acids. Catalyzes the dehydration of (3R)-3-hydroxydecanoyl-ACP to E-(2)-decenoyl-ACP and then its isomerization to Z-(3)-decenoyl-ACP. Can catalyze the dehydratase reaction for beta-hydroxyacyl-ACPs with saturated chain lengths up to 16:0, being most active on intermediate chain length. The sequence is that of 3-hydroxydecanoyl-[acyl-carrier-protein] dehydratase from Pseudomonas putida (strain GB-1).